We begin with the raw amino-acid sequence, 376 residues long: Flagellar P-ring protein 2 (376 aa).

Positions 1 to 19 (MTRLLLALILVVSAASAQA) are cleaved as a signal peptide.

It belongs to the FlgI family. As to quaternary structure, the basal body constitutes a major portion of the flagellar organelle and consists of four rings (L,P,S, and M) mounted on a central rod.

The protein resides in the periplasm. Its subcellular location is the bacterial flagellum basal body. In terms of biological role, assembles around the rod to form the L-ring and probably protects the motor/basal body from shearing forces during rotation. In Bradyrhizobium diazoefficiens (strain JCM 10833 / BCRC 13528 / IAM 13628 / NBRC 14792 / USDA 110), this protein is Flagellar P-ring protein 2.